Reading from the N-terminus, the 221-residue chain is NAD(P)H-hydrate epimerase (221 aa).

The 201-residue stretch at 10-210 (MQQIDNYTIE…DVGMLIPDDF (201 aa)) folds into the YjeF N-terminal domain. A (6S)-NADPHX-binding site is contributed by 58–62 (NNGAD). The K(+) site is built by Asn59 and Asp120. Residues 124 to 130 (GVGLNNV) and Asp153 each bind (6S)-NADPHX. Residue Thr156 coordinates K(+).

This sequence belongs to the NnrE/AIBP family. K(+) is required as a cofactor.

The catalysed reaction is (6R)-NADHX = (6S)-NADHX. It carries out the reaction (6R)-NADPHX = (6S)-NADPHX. Functionally, catalyzes the epimerization of the S- and R-forms of NAD(P)HX, a damaged form of NAD(P)H that is a result of enzymatic or heat-dependent hydration. This is a prerequisite for the S-specific NAD(P)H-hydrate dehydratase to allow the repair of both epimers of NAD(P)HX. This is NAD(P)H-hydrate epimerase from Leuconostoc mesenteroides subsp. mesenteroides (strain ATCC 8293 / DSM 20343 / BCRC 11652 / CCM 1803 / JCM 6124 / NCDO 523 / NBRC 100496 / NCIMB 8023 / NCTC 12954 / NRRL B-1118 / 37Y).